A 94-amino-acid chain; its full sequence is Lipolysis-activating peptide 1-beta chain (94 aa).

The first 19 residues, 1–19, serve as a signal peptide directing secretion; the sequence is MKILAVVLISVIVLNTANG. The region spanning 20–87 is the LCN-type CS-alpha/beta domain; it reads ENYYPQKYTN…FFNALESQCP (68 aa). 3 disulfide bridges follow: Cys-34–Cys-56, Cys-42–Cys-66, and Cys-46–Cys-68.

Belongs to the long (3 C-C) scorpion toxin superfamily. As to quaternary structure, homodimer; disulfide-linked or monomer (edited version) or heterodimer of an alpha chain (AC D9U299 or AC D9U2A4) and this beta chain (non-edited version). In terms of tissue distribution, expressed by the venom gland.

The protein localises to the secreted. Its function is as follows. The homodimer inhibits HMG-CoA reductase (HMGCR) (32% of inhibition produced by 0.6 uM), a glycoprotein involved in the control of cholesterol biosynthesis. The inhibitory effects of bumarsin are seen at much lower concentrations (0.6 uM) than that for statins such as atorvastatin (5 mM) and simvastatin (10 uM). In addition to inhibition of HMG-CoA reductase, this protein lowers cholesterol levels by inducing steroid hormone synthesis via StAR, and by increasing reverse cholesterol transport mediated by the induction of ABCA1 and APOA1. The heterodimer non-edited LVP1 induces lipolysis in rat adipocytes. Induction of lipolysis by LVP1 appears to be mediated through the beta-2 adrenergic receptor pathway (ADRB2). Functionally, the monomer edited version, similar to alpha-toxins, may modulate voltage-gated sodium channels (Nav) and may block voltage-gated potassium channels (Kv). The chain is Lipolysis-activating peptide 1-beta chain from Lychas mucronatus (Chinese swimming scorpion).